The primary structure comprises 504 residues: TGF-beta-activated kinase 1 and MAP3K7-binding protein 1 (504 aa).

A disordered region spans residues 1–22; the sequence is MAAQRRSLLQSEQQPSWTDDLP. A Phosphoserine modification is found at Ser-7. Residues 7–17 are compositionally biased toward polar residues; that stretch reads SLLQSEQQPSW. A PPM-type phosphatase domain is found at 28-365; that stretch reads GVGSASNRSY…EDMTLLVRNF (338 aa). Ser-378 bears the Phosphoserine mark. An O-linked (GlcNAc) serine glycan is attached at Ser-395. Phosphoserine; by MAPK14 is present on Ser-423. Residues 430 to 439 show a composition bias toward polar residues; sequence ATPTLTNQSP. Residues 430–478 are disordered; the sequence is ATPTLTNQSPTLTLQSTNTHTQSSSSSSDGGLFRSRPAHSLPPGEDGRV. Position 431 is a phosphothreonine; by MAPK14 (Thr-431). Residue Ser-438 is modified to Phosphoserine; by MAPK14. Residues 440–457 show a composition bias toward low complexity; that stretch reads TLTLQSTNTHTQSSSSSS. Phosphothreonine is present on Thr-442.

In terms of assembly, interacts with XIAP and BIRC7. Interacts with TRAF6 and MAP3K7; during IL-1 signaling. Identified in the TRIKA2 complex composed of MAP3K7, TAB1 and TAB2. Interacts with TRAF6 and MAPK14; these interactions allow MAPK14 autophosphorylation. Interacts with STING1; interaction takes place following cGAMP activation and promotes TAB1 recruitment to the endoplasmic reticulum, triggering MAP3K7/TAK1 activation and STING1 phosphorylation. In terms of processing, phosphorylated at all three sites Ser-423, Thr-431 and Ser-438 by MAPK14 when cells were exposed to cellular stresses, or stimulated with TNF-alpha, IL1 or LPS. These phosphorylations inhibit TAK1 activation by a feedback control mechanism. Dephosphorylated by DUSP14 at Ser-438, leading to TAB1-MAP3K7/TAK1 complex inactivation in T-cells. Post-translationally, ubiquitinated by MAP3K1 with 'Lys-63'-linked polyubiquitin; leading to activation of TAK1 and of JNK and p38 MAP kinases following EGF and TGF-beta stimulation. Ubiquitinated by ITCH with 'Lys-48'-linked polyubiquitin; leading to proteasomal degradation. Ubiquitinated by RNF114 during maternal-to-zygotic transition; leading to degradation. (Microbial infection) Deubiquitinated by Y.enterocolitica YopP. In terms of processing, O-GlcNAcylated at Ser-395 by OGT is required for full MAP3K7/TAK1 activation upon stimulation with IL-1 or osmotic stress. Deglycosylated at Ser-395 by OGA. As to expression, ubiquitous.

It is found in the cytoplasm. The protein localises to the cytosol. The protein resides in the endoplasmic reticulum membrane. Functionally, key adapter protein that plays an essential role in JNK and NF-kappa-B activation and proinflammatory cytokines production in response to stimulation with TLRs and cytokines. Mechanistically, associates with the catalytic domain of MAP3K7/TAK1 to trigger MAP3K7/TAK1 autophosphorylation leading to its full activation. Similarly, associates with MAPK14 and triggers its autophosphorylation and subsequent activation. In turn, MAPK14 phosphorylates TAB1 and inhibits MAP3K7/TAK1 activation in a feedback control mechanism. Also plays a role in recruiting MAPK14 to the TAK1 complex for the phosphorylation of the TAB2 and TAB3 regulatory subunits. The sequence is that of TGF-beta-activated kinase 1 and MAP3K7-binding protein 1 (TAB1) from Homo sapiens (Human).